The following is a 286-amino-acid chain: 4-diphosphocytidyl-2-C-methyl-D-erythritol kinase (286 aa).

Residue Lys-13 is part of the active site. 99–109 contacts ATP; that stretch reads PMGGGLGGGSS. Asp-141 is an active-site residue.

This sequence belongs to the GHMP kinase family. IspE subfamily.

The catalysed reaction is 4-CDP-2-C-methyl-D-erythritol + ATP = 4-CDP-2-C-methyl-D-erythritol 2-phosphate + ADP + H(+). The protein operates within isoprenoid biosynthesis; isopentenyl diphosphate biosynthesis via DXP pathway; isopentenyl diphosphate from 1-deoxy-D-xylulose 5-phosphate: step 3/6. Catalyzes the phosphorylation of the position 2 hydroxy group of 4-diphosphocytidyl-2C-methyl-D-erythritol. The chain is 4-diphosphocytidyl-2-C-methyl-D-erythritol kinase from Herminiimonas arsenicoxydans.